The following is an 851-amino-acid chain: Envelope glycoprotein gp160 (851 aa).

Residues 1-24 (MEPGRNQLLVAILLTSACLIYCKQ) form the signal peptide. Topologically, residues 25-669 (YVTVFYGIPA…LTSWIKYIQY (645 aa)) are extracellular. Asn-37 is a glycosylation site (N-linked (GlcNAc...) asparagine; by host). A disulfide bond links Cys-44 and Cys-57. 23 N-linked (GlcNAc...) asparagine; by host glycosylation sites follow: Asn-70, Asn-114, Asn-127, Asn-134, Asn-142, Asn-157, Asn-184, Asn-195, Asn-227, Asn-230, Asn-261, Asn-267, Asn-278, Asn-289, Asn-299, Asn-355, Asn-361, Asn-388, Asn-398, Asn-401, Asn-438, Asn-453, and Asn-456. Intrachain disulfides connect Cys-101–Cys-203, Cys-108–Cys-194, Cys-113–Cys-154, Cys-216–Cys-246, and Cys-226–Cys-238. The V1 stretch occupies residues 113–153 (CNITSGTTATPSPPNITIIDENSTCIGDNNCTGLGKEEVVE). Residues 154-194 (CEFNMTGLEQDKKRKYNDAWYSRDVVCDKTNGTGTCYMRHC) form a V2 region. Residues 294-327 (CKRPGNKTVVPITLMSGRRFHSRPVYNKKPGQAW) form a V3 region. Cys-294 and Cys-328 form a disulfide bridge. Cystine bridges form between Cys-380–Cys-437 and Cys-387–Cys-410. The segment at 387–410 (CNMTWFLNWVENKTNQTHGNYAPC) is V4. Residues 453 to 459 (NQTNITF) form a V5 region. Positions 502–522 (GVFVLGFLGFLATAGSAMGGA) are fusion peptide. The tract at residues 565-581 (LQARVTAIEKYLKDQAQ) is immunosuppression. 3 N-linked (GlcNAc...) asparagine; by host glycosylation sites follow: Asn-601, Asn-610, and Asn-626. An MPER; binding to GalCer region spans residues 647–668 (KLNSWDVFGNWFDLTSWIKYIQ). Residues 670–690 (GVYIVVGIIGLRIAIYIVQLL) form a helical membrane-spanning segment. At 691 to 851 (SRLRKGYRPV…IRQGAEIALL (161 aa)) the chain is on the cytoplasmic side. The YXXV motif; contains endocytosis signal signature appears at 697–700 (YRPV). Cys-763 carries the S-palmitoyl cysteine; by host lipid modification. The Di-leucine internalization motif motif lies at 850-851 (LL).

As to quaternary structure, the mature envelope protein (Env) consists of a homotrimer of non-covalently associated gp120-gp41 heterodimers. The resulting complex protrudes from the virus surface as a spike. There seems to be as few as 10 spikes on the average virion. Interacts with human CD4, CCR5 and CXCR4, to form a P4HB/PDI-CD4-CXCR4-gp120 complex. Gp120 also interacts with the C-type lectins CD209/DC-SIGN and CLEC4M/DC-SIGNR (collectively referred to as DC-SIGN(R)). Gp120 and gp41 interact with GalCer. The mature envelope protein (Env) consists of a homotrimer of non-covalently associated gp120-gp41 heterodimers. The resulting complex protrudes from the virus surface as a spike. There seems to be as few as 10 spikes on the average virion. Specific enzymatic cleavages in vivo yield mature proteins. Envelope glycoproteins are synthesized as an inactive precursor that is heavily N-glycosylated and processed likely by host cell furin in the Golgi to yield the mature SU and TM proteins. The cleavage site between SU and TM requires the minimal sequence [KR]-X-[KR]-R. Post-translationally, palmitoylation of the transmembrane protein and of Env polyprotein (prior to its proteolytic cleavage) is essential for their association with host cell membrane lipid rafts. Palmitoylation is therefore required for envelope trafficking to classical lipid rafts, but not for viral replication.

Its subcellular location is the virion membrane. The protein resides in the host cell membrane. It localises to the host endosome membrane. Its function is as follows. The surface protein gp120 (SU) attaches the virus to the host lymphoid cell by binding to the primary receptor CD4. This interaction induces a structural rearrangement creating a high affinity binding site for a chemokine coreceptor like CXCR4 and/or CCR5. This peculiar 2 stage receptor-interaction strategy allows gp120 to maintain the highly conserved coreceptor-binding site in a cryptic conformation, protected from neutralizing antibodies. Since CD4 also displays a binding site for the disulfide-isomerase P4HB/PDI, a P4HB/PDI-CD4-CXCR4-gp120 complex may form. In that complex, P4HB/PDI could reach and reduce gp120 disulfide bonds, causing major conformational changes in gp120. TXN, another PDI family member could also be involved in disulfide rearrangements in Env during fusion. These changes are transmitted to the transmembrane protein gp41 and are thought to activate its fusogenic potential by unmasking its fusion peptide. The surface protein gp120 is a ligand for CD209/DC-SIGN and CLEC4M/DC-SIGNR, which are respectively found on dendritic cells (DCs), and on endothelial cells of liver sinusoids and lymph node sinuses. These interactions allow capture of viral particles at mucosal surfaces by these cells and subsequent transmission to permissive cells. DCs are professional antigen presenting cells, critical for host immunity by inducing specific immune responses against a broad variety of pathogens. They act as sentinels in various tissues where they take up antigen, process it, and present it to T-cells following migration to lymphoid organs. HIV subverts the migration properties of dendritic cells to gain access to CD4+ T-cells in lymph nodes. Virus transmission to permissive T-cells occurs either in trans (without DCs infection, through viral capture and transmission), or in cis (following DCs productive infection, through the usual CD4-gp120 interaction), thereby inducing a robust infection. In trans infection, bound virions remain infectious over days and it is proposed that they are not degraded, but protected in non-lysosomal acidic organelles within the DCs close to the cell membrane thus contributing to the viral infectious potential during DCs' migration from the periphery to the lymphoid tissues. On arrival at lymphoid tissues, intact virions recycle back to DCs' cell surface allowing virus transmission to CD4+ T-cells. Virion capture also seems to lead to MHC-II-restricted viral antigen presentation, and probably to the activation of HIV-specific CD4+ cells. In terms of biological role, the transmembrane protein gp41 (TM) acts as a class I viral fusion protein. Under the current model, the protein has at least 3 conformational states: pre-fusion native state, pre-hairpin intermediate state, and post-fusion hairpin state. During fusion of viral and target intracellular membranes, the coiled coil regions (heptad repeats) assume a trimer-of-hairpins structure, positioning the fusion peptide in close proximity to the C-terminal region of the ectodomain. The formation of this structure appears to drive apposition and subsequent fusion of viral and target cell membranes. Complete fusion occurs in host cell endosomes and is dynamin-dependent, however some lipid transfer might occur at the plasma membrane. The virus undergoes clathrin-dependent internalization long before endosomal fusion, thus minimizing the surface exposure of conserved viral epitopes during fusion and reducing the efficacy of inhibitors targeting these epitopes. Membranes fusion leads to delivery of the nucleocapsid into the cytoplasm. Functionally, the envelope glycoprotein gp160 precursor down-modulates cell surface CD4 antigen by interacting with it in the endoplasmic reticulum and blocking its transport to the cell surface. Its function is as follows. The gp120-gp41 heterodimer seems to contribute to T-cell depletion during HIV-1 infection. The envelope glycoproteins expressed on the surface of infected cells induce apoptosis through an interaction with uninfected cells expressing the receptor (CD4) and the coreceptors CXCR4 or CCR5. This type of bystander killing may be obtained by at least three distinct mechanisms. First, the interaction between the 2 cells can induce cellular fusion followed by nuclear fusion within the syncytium. Syncytia are condemned to die from apoptosis. Second, the 2 interacting cells may not fuse entirely and simply exchange plasma membrane lipids, after a sort of hemifusion process, followed by rapid death. Third, it is possible that virus-infected cells, on the point of undergoing apoptosis, fuse with CD4-expressing cells, in which case apoptosis is rapidly transmitted from one cell to the other and thus occurs in a sort of contagious fashion. The gp120-gp41 heterodimer allows rapid transcytosis of the virus through CD4 negative cells such as simple epithelial monolayers of the intestinal, rectal and endocervical epithelial barriers. Both gp120 and gp41 specifically recognize glycosphingolipids galactosyl-ceramide (GalCer) or 3' sulfo-galactosyl-ceramide (GalS) present in the lipid rafts structures of epithelial cells. Binding to these alternative receptors allows the rapid transcytosis of the virus through the epithelial cells. This transcytotic vesicle-mediated transport of virions from the apical side to the basolateral side of the epithelial cells does not involve infection of the cells themselves. The polypeptide is Envelope glycoprotein gp160 (env) (Human immunodeficiency virus type 2 subtype A (isolate D194) (HIV-2)).